We begin with the raw amino-acid sequence, 400 residues long: Phosphoglycerate kinase (400 aa).

Substrate-binding positions include 22-24 (DFN), arginine 38, 61-64 (HLGR), arginine 120, and arginine 153. Residues lysine 206, glycine 297, glutamate 328, and 354–357 (GGDT) each bind ATP.

Belongs to the phosphoglycerate kinase family. In terms of assembly, monomer.

It is found in the cytoplasm. The catalysed reaction is (2R)-3-phosphoglycerate + ATP = (2R)-3-phospho-glyceroyl phosphate + ADP. It participates in carbohydrate degradation; glycolysis; pyruvate from D-glyceraldehyde 3-phosphate: step 2/5. The polypeptide is Phosphoglycerate kinase (Campylobacter curvus (strain 525.92)).